The following is a 423-amino-acid chain: Tumor necrosis factor receptor superfamily member 19 (423 aa).

A signal peptide spans 1 to 29 (MALKVLLEQEKTFFTLLVLLGYLSCKVTC). The Extracellular segment spans residues 30–170 (ESGDCRQQEF…TASSPRDTAL (141 aa)). 3 TNFR-Cys repeats span residues 33–72 (DCRQQEFRDRSGNCVPCNQCGPGMELSKECGFGYGEDAQC), 74–114 (TCRL…DAIC), and 116–149 (DCLPGFYRKTKLVGFQDMECVPCGDPPPPYEPHC). Disulfide bonds link C34–C46, C49–C62, C52–C72, C75–C89, C92–C106, C95–C114, C117–C135, and C138–C149. Residue N105 is glycosylated (N-linked (GlcNAc...) asparagine). The helical transmembrane segment at 171–191 (AAVICSALATVLLALLILCVI) threads the bilayer. At 192 to 423 (YCKRQFMEKK…LQVRQRLGSL (232 aa)) the chain is on the cytoplasmic side.

In terms of assembly, associates with TRAF1, TRAF2, TRAF3 and TRAF5. Interacts with LINGO1. As to expression, highly expressed in prostate. Detected at lower levels in thymus, spleen, testis, uterus, small intestine, colon and peripheral blood leukocytes.

Its subcellular location is the membrane. Functionally, can mediate activation of JNK and NF-kappa-B. May promote caspase-independent cell death. The chain is Tumor necrosis factor receptor superfamily member 19 (TNFRSF19) from Homo sapiens (Human).